The following is a 326-amino-acid chain: Transcription factor MYB16 (326 aa).

2 consecutive HTH myb-type domains span residues 9-61 (KLGL…TNYL) and 62-116 (RPDI…KKRL). 2 consecutive DNA-binding regions (H-T-H motif) follow at residues 37-61 (WRSL…TNYL) and 89-112 (WSAI…NTHL). 2 disordered regions span residues 197–217 (NWTT…STVS) and 280–299 (DRSF…GGDC). A compositionally biased stretch (polar residues) spans 208-217 (QLESPTSTVS). Basic and acidic residues predominate over residues 280–290 (DRSFSGDKNET).

In terms of tissue distribution, expressed in trichomes, epidermis and mesophyll cells of young leaves, stems, petals, sepals, carpels and stamens.

It is found in the nucleus. Functionally, involved in the control of epidermal cell morphogenesis in petals. Promotes unidirectional cell expansion once outgrowth has been initiated. Coordinately with WIN1/SHN1, participates in the regulation of cuticle biosynthesis and wax accumulation in reproductive organs and trichomes. Functions in cuticle nanoridge formation in petals and stamens, and in morphogenesis of petal conical cells and trichomes. Functions as a major regulator of cuticle formation in vegetative organs by regulating the cuticle biosynthesis genes CYP86A8/LCR and CER1. This is Transcription factor MYB16 from Arabidopsis thaliana (Mouse-ear cress).